The primary structure comprises 603 residues: Elongation factor 4 (603 aa).

A tr-type G domain is found at 6-188; the sequence is AHIRNFCIIA…SVVQNVPPPS (183 aa). Residues 18–23 and 135–138 each bind GTP; these read DHGKST and NKID.

Belongs to the TRAFAC class translation factor GTPase superfamily. Classic translation factor GTPase family. LepA subfamily.

Its subcellular location is the cell inner membrane. The catalysed reaction is GTP + H2O = GDP + phosphate + H(+). In terms of biological role, required for accurate and efficient protein synthesis under certain stress conditions. May act as a fidelity factor of the translation reaction, by catalyzing a one-codon backward translocation of tRNAs on improperly translocated ribosomes. Back-translocation proceeds from a post-translocation (POST) complex to a pre-translocation (PRE) complex, thus giving elongation factor G a second chance to translocate the tRNAs correctly. Binds to ribosomes in a GTP-dependent manner. In Myxococcus xanthus (strain DK1622), this protein is Elongation factor 4.